Consider the following 512-residue polypeptide: ETS translocation variant 3 (512 aa).

The segment at residues 35 to 116 is a DNA-binding region (ETS); that stretch reads IQLWHFILEL…KGKRFTYKFN (82 aa). The tract at residues 136 to 222 is disordered; sequence VPQSAPPVPT…NAIGGGGIGH (87 aa). 3 positions are modified to phosphoserine: S139, S159, and S315. The span at 158–184 shows a compositional bias: polar residues; sequence HSPTNDVQPGRFSASSLTASGQESSNG. A disordered region spans residues 336 to 512; sequence PEESTQFSIK…QGLATAAADA (177 aa). Composition is skewed to basic and acidic residues over residues 380–406, 453–468, and 479–491; these read IKVEPASEKDPESLRQSAREKEEHTQE, DRPGKEPSAPEKKEDA, and RWNDDPEARELSK. A Glycyl lysine isopeptide (Lys-Gly) (interchain with G-Cter in SUMO2) cross-link involves residue K381. K388 carries the post-translational modification N6-acetyllysine; alternate. K388 participates in a covalent cross-link: Glycyl lysine isopeptide (Lys-Gly) (interchain with G-Cter in SUMO2); alternate.

The protein belongs to the ETS family.

Its subcellular location is the nucleus. Transcriptional repressor that contribute to growth arrest during terminal macrophage differentiation by repressing target genes involved in Ras-dependent proliferation. Represses MMP1 promoter activity. The protein is ETS translocation variant 3 (ETV3) of Homo sapiens (Human).